The primary structure comprises 111 residues: uncharacterized protein (111 aa).

Homodimer, or homotetramer.

This is an uncharacterized protein from Bacillus subtilis (strain 168).